An 877-amino-acid polypeptide reads, in one-letter code: Hopanoid transporter HpnN (877 aa).

Residues 1–16 (MVTSLIVRLVAWSVRR) are Cytoplasmic-facing. The chain crosses the membrane as a helical span at residues 17-37 (PVWVVVLSLLIAAFSGVYVAR). Over 38-279 (HFKINTDISK…FSSVEDGAAL (242 aa)) the chain is Periplasmic. A helical transmembrane segment spans residues 280 to 295 (NGVVTLLVVFVILWLA). Topologically, residues 296–299 (LRSK) are cytoplasmic. Residues 300–323 (RMIASVLVTLFVGLVVTAALGLAM) form a helical membrane-spanning segment. One can recognise an SSD domain in the interval 302–428 (IASVLVTLFV…LTLLPALLRL (127 aa)). At 324–332 (VGSLNMISV) the chain is on the periplasmic side. A helical membrane pass occupies residues 333-351 (AFMVLFVGLGVDFSIQYGV). Topologically, residues 352-373 (KYREERFRDERIDHALIGAAHS) are cytoplasmic. Residues 374–394 (MGMPLALATTAVAASFFSFIP) traverse the membrane as a helical segment. The Periplasmic segment spans residues 395–399 (TAYRG). A helical membrane pass occupies residues 400-426 (VSELGLIAGVGMFVALLTTLTLLPALL). The Cytoplasmic portion of the chain corresponds to 427-452 (RLFAPPGESKTPGFPWLAPVDDYLDR). A helical transmembrane segment spans residues 453 to 472 (HRKPILIGTLAVVIGALPLL). Residues 473–718 (AFLHFDFNPL…ILHSANTIIS (246 aa)) lie on the Periplasmic side of the membrane. Residues 719-739 (AFLHAALWSIISITILLWITL) form a helical membrane-spanning segment. The Cytoplasmic portion of the chain corresponds to 740–743 (RRFG). A helical transmembrane segment spans residues 744–766 (DVLRTLVPLLVSGIVTLEMCVVL). At 767–774 (GMSLNFAN) the chain is on the periplasmic side. A helical transmembrane segment spans residues 775–794 (IIALPLMLGVGVAFKVYFVM). The Cytoplasmic portion of the chain corresponds to 795–809 (AWRAGQTGLLHSSLT). Residues 810 to 827 (HAVLFSAATTATAFGSLW) traverse the membrane as a helical segment. At 828–836 (LSHHPGTSS) the chain is on the periplasmic side. Residues 837–858 (MGKLLALALTCTLIGAVVFQPV) traverse the membrane as a helical segment. Over 859–877 (LMGKPRVKRAKNQSQGINE) the chain is Cytoplasmic.

Belongs to the resistance-nodulation-cell division (RND) (TC 2.A.6) family. MmpL subfamily. As to quaternary structure, homodimer.

The protein resides in the cell inner membrane. Essential for hopanoid transport from the cytoplasmic to the outer membrane. Is capable of shuttling hopanoid lipids from the inner membrane to the periplasm, where they probably spontaneously insert to the inner leaflet of the outer membrane, strengthening the cell envelope. May be a proton-motive-force (PMF)-dependent transporter. Is critical for multidrug resistance and cell wall remodeling in Burkholderia. This chain is Hopanoid transporter HpnN, found in Burkholderia multivorans (strain ATCC 17616 / 249).